A 213-amino-acid polypeptide reads, in one-letter code: MRIVLLTGFEPFDQDPVNPSWEAVRQLDGVQLGSDVKIVARRLPCAFATAGECLTRLIDELHPAMVIATGLGPGRSDISVERVAININDARIPDNLGEQPIDTAVVADGPAAFFTTLPIKAMVKAVREAGIAASVSQTAGTFVCNQVFYLLQHALAGSGVRSGFIHVPFLPEQVAGSQRPSMALDAMVAGLQAAVLTAWHTPVDVKEAGGQVS.

Residues glutamate 81, cysteine 144, and histidine 166 contribute to the active site.

Belongs to the peptidase C15 family. Homodimer.

Its subcellular location is the cytoplasm. It catalyses the reaction Release of an N-terminal pyroglutamyl group from a polypeptide, the second amino acid generally not being Pro.. Its function is as follows. Removes 5-oxoproline from various penultimate amino acid residues except L-proline. This is Pyrrolidone-carboxylate peptidase (pcp) from Pseudomonas fluorescens.